Consider the following 172-residue polypeptide: 18.6 kDa class III heat shock protein (172 aa).

Residues arginine 29–glycine 54 form a disordered region. The sHSP domain maps to isoleucine 48 to alanine 172.

The protein belongs to the small heat shock protein (HSP20) family. In terms of assembly, may form oligomeric structures.

Its subcellular location is the cytoplasm. This Oryza sativa subsp. japonica (Rice) protein is 18.6 kDa class III heat shock protein (HSP18.6).